A 484-amino-acid polypeptide reads, in one-letter code: Cobyric acid synthase (484 aa).

The 192-residue stretch at 246–437 (ALRVVVPALP…VHGLFDTPAA (192 aa)) folds into the GATase cobBQ-type domain. The active-site Nucleophile is the Cys327. His429 is an active-site residue.

It belongs to the CobB/CobQ family. CobQ subfamily.

Its pathway is cofactor biosynthesis; adenosylcobalamin biosynthesis. In terms of biological role, catalyzes amidations at positions B, D, E, and G on adenosylcobyrinic A,C-diamide. NH(2) groups are provided by glutamine, and one molecule of ATP is hydrogenolyzed for each amidation. The chain is Cobyric acid synthase from Paraburkholderia phymatum (strain DSM 17167 / CIP 108236 / LMG 21445 / STM815) (Burkholderia phymatum).